Consider the following 337-residue polypeptide: Fructose-1,6-bisphosphatase class 1 (337 aa).

Mg(2+)-binding residues include E89, D112, L114, and D115. Substrate is bound by residues D115–S118, N208, Y241, and K271. Mg(2+) is bound at residue E277.

Belongs to the FBPase class 1 family. As to quaternary structure, homotetramer. Mg(2+) is required as a cofactor.

The protein localises to the cytoplasm. It catalyses the reaction beta-D-fructose 1,6-bisphosphate + H2O = beta-D-fructose 6-phosphate + phosphate. It functions in the pathway carbohydrate biosynthesis; gluconeogenesis. The polypeptide is Fructose-1,6-bisphosphatase class 1 (Yersinia pestis bv. Antiqua (strain Antiqua)).